The chain runs to 125 residues: S-adenosylmethionine decarboxylase proenzyme (125 aa).

S71 serves as the catalytic Schiff-base intermediate with substrate; via pyruvic acid. S71 carries the pyruvic acid (Ser); by autocatalysis modification. Residue H76 is the Proton acceptor; for processing activity of the active site. The Proton donor; for catalytic activity role is filled by C91.

Belongs to the prokaryotic AdoMetDC family. Type 1 subfamily. In terms of assembly, heterotetramer of two alpha and two beta chains arranged as a dimer of alpha/beta heterodimers. Pyruvate serves as cofactor. In terms of processing, is synthesized initially as an inactive proenzyme. Formation of the active enzyme involves a self-maturation process in which the active site pyruvoyl group is generated from an internal serine residue via an autocatalytic post-translational modification. Two non-identical subunits are generated from the proenzyme in this reaction, and the pyruvate is formed at the N-terminus of the alpha chain, which is derived from the carboxyl end of the proenzyme. The post-translation cleavage follows an unusual pathway, termed non-hydrolytic serinolysis, in which the side chain hydroxyl group of the serine supplies its oxygen atom to form the C-terminus of the beta chain, while the remainder of the serine residue undergoes an oxidative deamination to produce ammonia and the pyruvoyl group blocking the N-terminus of the alpha chain.

The catalysed reaction is S-adenosyl-L-methionine + H(+) = S-adenosyl 3-(methylsulfanyl)propylamine + CO2. It functions in the pathway amine and polyamine biosynthesis; S-adenosylmethioninamine biosynthesis; S-adenosylmethioninamine from S-adenosyl-L-methionine: step 1/1. Its function is as follows. Catalyzes the decarboxylation of S-adenosylmethionine to S-adenosylmethioninamine (dcAdoMet), the propylamine donor required for the synthesis of the polyamines spermine and spermidine from the diamine putrescine. The protein is S-adenosylmethionine decarboxylase proenzyme of Pyrobaculum islandicum (strain DSM 4184 / JCM 9189 / GEO3).